A 307-amino-acid chain; its full sequence is Protease HtpX homolog 1 (307 aa).

2 consecutive transmembrane segments (helical) span residues leucine 7 to tyrosine 27 and isoleucine 38 to glycine 60. Histidine 133 serves as a coordination point for Zn(2+). Glutamate 134 is an active-site residue. Residue histidine 137 participates in Zn(2+) binding. The next 2 helical transmembrane spans lie at isoleucine 145 to phenylalanine 165 and leucine 180 to leucine 200. Glutamate 212 contributes to the Zn(2+) binding site.

The protein belongs to the peptidase M48B family. The cofactor is Zn(2+).

It is found in the cell membrane. The chain is Protease HtpX homolog 1 from Sulfolobus acidocaldarius (strain ATCC 33909 / DSM 639 / JCM 8929 / NBRC 15157 / NCIMB 11770).